The following is a 193-amino-acid chain: Ion-translocating oxidoreductase complex subunit A (193 aa).

6 consecutive transmembrane segments (helical) span residues 5–25 (LLLF…FLGL), 47–67 (FVMT…LVPL), 72–92 (LRTM…EMVV), 102–122 (LLGI…VALL), 134–154 (ALYG…FAAI), and 171–191 (AIAL…SGLV).

This sequence belongs to the NqrDE/RnfAE family. As to quaternary structure, the complex is composed of six subunits: RnfA, RnfB, RnfC, RnfD, RnfE and RnfG.

The protein localises to the cell inner membrane. Part of a membrane-bound complex that couples electron transfer with translocation of ions across the membrane. The chain is Ion-translocating oxidoreductase complex subunit A from Cronobacter sakazakii (strain ATCC BAA-894) (Enterobacter sakazakii).